Reading from the N-terminus, the 490-residue chain is GTPase Der (490 aa).

2 consecutive EngA-type G domains span residues 3-166 (PVVA…MEDL) and 203-376 (IKLA…DSST). GTP is bound by residues 9–16 (GRPNVGKS), 56–60 (DTGGI), 118–121 (NKTD), 209–216 (GRPNVGKS), 256–260 (DTAGV), and 321–324 (NKWD). The KH-like domain occupies 377–461 (RRVGTSMLTR…PIRIQFKEGE (85 aa)).

Belongs to the TRAFAC class TrmE-Era-EngA-EngB-Septin-like GTPase superfamily. EngA (Der) GTPase family. Associates with the 50S ribosomal subunit.

Functionally, GTPase that plays an essential role in the late steps of ribosome biogenesis. The chain is GTPase Der from Escherichia coli O7:K1 (strain IAI39 / ExPEC).